Reading from the N-terminus, the 693-residue chain is Elongation factor G 1 (693 aa).

Residues 4–281 (NKLRNIGISA…AVTRFLPSPH (278 aa)) form the tr-type G domain. GTP contacts are provided by residues 13 to 20 (AHIDSGKT), 80 to 84 (DTPGH), and 134 to 137 (NKCD).

The protein belongs to the TRAFAC class translation factor GTPase superfamily. Classic translation factor GTPase family. EF-G/EF-2 subfamily.

It localises to the cytoplasm. Its function is as follows. Catalyzes the GTP-dependent ribosomal translocation step during translation elongation. During this step, the ribosome changes from the pre-translocational (PRE) to the post-translocational (POST) state as the newly formed A-site-bound peptidyl-tRNA and P-site-bound deacylated tRNA move to the P and E sites, respectively. Catalyzes the coordinated movement of the two tRNA molecules, the mRNA and conformational changes in the ribosome. The chain is Elongation factor G 1 from Borrelia garinii subsp. bavariensis (strain ATCC BAA-2496 / DSM 23469 / PBi) (Borreliella bavariensis).